Here is a 460-residue protein sequence, read N- to C-terminus: V-type ATP synthase beta chain (460 aa).

This sequence belongs to the ATPase alpha/beta chains family.

Its function is as follows. Produces ATP from ADP in the presence of a proton gradient across the membrane. The V-type beta chain is a regulatory subunit. This is V-type ATP synthase beta chain from Thermotoga neapolitana (strain ATCC 49049 / DSM 4359 / NBRC 107923 / NS-E).